The primary structure comprises 154 residues: Putative esterase AF_2264 (154 aa).

The protein belongs to the thioesterase PaaI family.

This Archaeoglobus fulgidus (strain ATCC 49558 / DSM 4304 / JCM 9628 / NBRC 100126 / VC-16) protein is Putative esterase AF_2264.